Reading from the N-terminus, the 286-residue chain is 2-dehydro-3-deoxyphosphooctonate aldolase (286 aa).

The protein belongs to the KdsA family.

It is found in the cytoplasm. It catalyses the reaction D-arabinose 5-phosphate + phosphoenolpyruvate + H2O = 3-deoxy-alpha-D-manno-2-octulosonate-8-phosphate + phosphate. It participates in carbohydrate biosynthesis; 3-deoxy-D-manno-octulosonate biosynthesis; 3-deoxy-D-manno-octulosonate from D-ribulose 5-phosphate: step 2/3. Its pathway is bacterial outer membrane biogenesis; lipopolysaccharide biosynthesis. In Shewanella denitrificans (strain OS217 / ATCC BAA-1090 / DSM 15013), this protein is 2-dehydro-3-deoxyphosphooctonate aldolase.